We begin with the raw amino-acid sequence, 210 residues long: Claudin-4 (210 aa).

Residues 1 to 7 (MASMGLQ) lie on the Cytoplasmic side of the membrane. The segment at 1 to 103 (MASMGLQVLG…GMLLSVVGGK (103 aa)) is interaction with EPHA2. The helical transmembrane segment at 8–28 (VLGISLAVLGWLGIILSCALP) threads the bilayer. The Extracellular portion of the chain corresponds to 29 to 81 (MWRVTAFIGSNIVTAQTSWEGLWMNCVVQSTGQMQCKMYDSMLALPQDLQAAR). A disulfide bond links cysteine 54 and cysteine 64. The helical transmembrane segment at 82-102 (ALMVISIIVGALGMLLSVVGG) threads the bilayer. Over 103-116 (KCTNCMEDETVKAK) the chain is Cytoplasmic. Residues 117–137 (IMITAGAVFIVASMLIMVPVS) form a helical membrane-spanning segment. At 138–160 (WTAHNVIRDFYNPMVASGQKREM) the chain is on the extracellular side. The chain crosses the membrane as a helical span at residues 161 to 181 (GASLYVGWAASGLLLLGGGLL). At 182-210 (CCSCPPRSNDKPYSAKYSAARSVPASNYV) the chain is on the cytoplasmic side. Position 209 is a phosphotyrosine; by EPHA2 (tyrosine 209). The interactions with TJP1, TJP2 and TJP3 stretch occupies residues 209 to 210 (YV).

The protein belongs to the claudin family. Can form heteropolymeric strands with other claudins. Interacts with CLDN8. Interacts with CLDN1. Directly interacts with TJP1/ZO-1, TJP2/ZO-2 and TJP3/ZO-3. Interacts with EPHA2; phosphorylates CLDN4 and may regulate tight junctions. Phosphorylated. Phosphorylation by EPHA2 is stimulated by EFNA1 and alters interaction with TJP1. Expressed primarily in lung and kidney. Present in both cortical and medullar collecting ducts (at protein level).

It localises to the cell junction. The protein resides in the tight junction. It is found in the cell membrane. It catalyses the reaction chloride(in) = chloride(out). It carries out the reaction bromide(in) = bromide(out). The catalysed reaction is iodide(out) = iodide(in). The enzyme catalyses fluoride(in) = fluoride(out). Its function is as follows. Can associate with other claudins to regulate tight junction structural and functional strand dynamics. May coassemble with CLDN8 into tight junction strands containing anion-selective channels that convey paracellular chloride permeability in renal collecting ducts. May integrate into CLDN3 strands to modulate localized tight junction barrier properties. May disrupt strand assembly of channel-forming CLDN2 and CLDN15 and inhibit cation conductance. Cannot form tight junction strands on its own. In Mus musculus (Mouse), this protein is Claudin-4.